The sequence spans 842 residues: Serine/threonine-protein kinase CLA4 (842 aa).

Residues 12–34 (DNDFQNIGPAPRPPSSNSQGRTC) form a disordered region. Phosphoserine occurs at positions 29 and 46. The region spanning 61-179 (SKKKSGWVSY…WLDAIFAKCP (119 aa)) is the PH domain. The region spanning 184-197 (VSSPTNFTHKVHVG) is the CRIB domain. Residues 247–274 (GNPTNTLDKPQSGETSSSQKSLPNSYND) show a composition bias toward polar residues. The interval 247-524 (GNPTNTLDKP…KPKKPARPTM (278 aa)) is disordered. A compositionally biased stretch (low complexity) spans 279-296 (NNSVNSKSSSGVSSSMVS). Over residues 297 to 307 (QRKTSQPPNTK) the composition is skewed to polar residues. The span at 308 to 319 (SPVSLGSGSLPP) shows a compositional bias: low complexity. The segment covering 323 to 343 (KLPTSQSNIPRHLQNVPNQQY) has biased composition (polar residues). A phosphoserine mark is found at serine 351 and serine 367. Residues 372 to 387 (QQQQQQQQQQKQQHQQ) are compositionally biased toward low complexity. The span at 396 to 408 (SPSPSPSPSPLNP) shows a compositional bias: pro residues. Over residues 418 to 435 (PYSKQPQSPLSSQSTQNQ) the composition is skewed to low complexity. At serine 425 the chain carries Phosphoserine. Polar residues-rich tracts occupy residues 470-481 (PSNQNATSNTHV) and 488-497 (NDQSTPQTMR). The Protein kinase domain occupies 546–825 (FKVIEKAGQG…TEELLHHGFF (280 aa)). Residues 552-560 (AGQGASGSV) and lysine 594 each bind ATP. Aspartate 693 serves as the catalytic Proton acceptor.

This sequence belongs to the protein kinase superfamily. STE Ser/Thr protein kinase family. STE20 subfamily. In terms of assembly, interacts with CDC42.

The catalysed reaction is L-seryl-[protein] + ATP = O-phospho-L-seryl-[protein] + ADP + H(+). It carries out the reaction L-threonyl-[protein] + ATP = O-phospho-L-threonyl-[protein] + ADP + H(+). Involved in budding and cytokinesis. The polypeptide is Serine/threonine-protein kinase CLA4 (CLA4) (Saccharomyces cerevisiae (strain ATCC 204508 / S288c) (Baker's yeast)).